A 305-amino-acid chain; its full sequence is Carbamate kinase (305 aa).

It belongs to the carbamate kinase family.

The protein localises to the cytoplasm. It catalyses the reaction hydrogencarbonate + NH4(+) + ATP = carbamoyl phosphate + ADP + H2O + H(+). It participates in metabolic intermediate metabolism; carbamoyl phosphate degradation; CO(2) and NH(3) from carbamoyl phosphate: step 1/1. This chain is Carbamate kinase (arcC), found in Thermoplasma acidophilum (strain ATCC 25905 / DSM 1728 / JCM 9062 / NBRC 15155 / AMRC-C165).